The primary structure comprises 226 residues: NEDD8-specific protease 1 (226 aa).

It belongs to the peptidase C48 family.

In terms of biological role, processes the pre-form of the ubiquitin-like protein NEDD8/RUB1. Has the capacity to discriminate between NEDD8/RUB1 and ubiquitin. Has no SUMO protease activity. The chain is NEDD8-specific protease 1 (NEDP1) from Arabidopsis thaliana (Mouse-ear cress).